Here is a 325-residue protein sequence, read N- to C-terminus: MADQEFDIDAYFASQSEGKSVVASTPENQHCGFVAIVGRPNVGKSTLLNNLLGQKISITSRKPQTTRHRIMGVETDGNYQAIYVDTPGLHIEEKRAINRLMNRAASSSLSDVNLVLFVVEGTHWTADDEMVFTKLQKANFPVVLCVNKVDQVKDRNEVMLHMLELSKRMQFVDIVPISAKQGKNTDVLKKHVRDHLPKAVHHFPEEYVTDRSQRFMASEIVREKLMRFTGEELPYSVTVEIERFDYNPDTDGFHINALILVERIGQKKMVIGKNGEKIKTIGREARLDMEELFGRKVYLETWVKVKSGWADDERALRSLGYIDDL.

An Era-type G domain is found at 30–198 (HCGFVAIVGR…KKHVRDHLPK (169 aa)). A G1 region spans residues 38-45 (GRPNVGKS). 38 to 45 (GRPNVGKS) is a binding site for GTP. Residues 64 to 68 (QTTRH) are G2. Residues 85-88 (DTPG) form a G3 region. Residues 85–89 (DTPGL) and 147–150 (NKVD) contribute to the GTP site. The tract at residues 147 to 150 (NKVD) is G4. Residues 177–179 (ISA) form a G5 region. The KH type-2 domain maps to 221-307 (VREKLMRFTG…YLETWVKVKS (87 aa)).

It belongs to the TRAFAC class TrmE-Era-EngA-EngB-Septin-like GTPase superfamily. Era GTPase family. As to quaternary structure, monomer.

The protein resides in the cytoplasm. Its subcellular location is the cell inner membrane. Functionally, an essential GTPase that binds both GDP and GTP, with rapid nucleotide exchange. Plays a role in 16S rRNA processing and 30S ribosomal subunit biogenesis and possibly also in cell cycle regulation and energy metabolism. The polypeptide is GTPase Era (Vibrio cholerae serotype O1 (strain ATCC 39315 / El Tor Inaba N16961)).